The chain runs to 221 residues: Mediator of RNA polymerase II transcription subunit 19a (221 aa).

The interval 101-221 (PVELPPAEKG…DEVGAIRVAG (121 aa)) is disordered. A compositionally biased stretch (basic residues) spans 142–152 (EHKKHKHKHKD). Positions 153–178 (RSKDKDKDKDRDRKKDKNGHHDSGDH) are enriched in basic and acidic residues. Positions 179–188 (SKKHHDKKRK) are enriched in basic residues.

It belongs to the plant Mediator complex subunit 19 family. As to quaternary structure, component of the Mediator complex. Interacts with FIB2.

The protein resides in the nucleus. Functionally, component of the Mediator complex, a coactivator involved in the regulated transcription of nearly all RNA polymerase II-dependent genes. Mediator functions as a bridge to convey information from gene-specific regulatory proteins to the basal RNA polymerase II transcription machinery. The Mediator complex, having a compact conformation in its free form, is recruited to promoters by direct interactions with regulatory proteins and serves for the assembly of a functional preinitiation complex with RNA polymerase II and the general transcription factors. The polypeptide is Mediator of RNA polymerase II transcription subunit 19a (MED19A) (Arabidopsis thaliana (Mouse-ear cress)).